We begin with the raw amino-acid sequence, 391 residues long: Putative ABC transporter glucose-binding protein TsgA13 (391 aa).

Positions Met1 to Cys28 are cleaved as a signal peptide. Positions Thr24–Glu71 are disordered. The span at Ser42–Val59 shows a compositional bias: low complexity.

The protein belongs to the BMP lipoprotein family. The complex is composed of two ATP-binding proteins (TsgD13), two transmembrane proteins (TsgB13 and TsgC13) and a solute-binding protein (TsgA13).

Part of an ABC transporter complex involved in glucose import. This is Putative ABC transporter glucose-binding protein TsgA13 (tsgA13) from Haloferax volcanii (strain ATCC 29605 / DSM 3757 / JCM 8879 / NBRC 14742 / NCIMB 2012 / VKM B-1768 / DS2) (Halobacterium volcanii).